The following is a 240-amino-acid chain: MILYPAIDLKDGQAVRLYKGDMDKATVFNDSPAAQARAFQDAGCAWLHLVDLNGAFAGAPVNAAAVEAILAETSVPAQLGGGIRDMATIEMWLGKGIARVILGTVAVEDPELVRAAAKAFPGQVAVGLDARAGRVATRGWAEETDLMVTDLARSFEDAGVAAIIYTDIDRDGAMQGPNVAATAALARATSIPVIASGGVSSLDDLRALKASGAPLDGAISGRALYDGAIDLAEALAVLAD.

The active-site Proton acceptor is Asp-8. Residue Asp-129 is the Proton donor of the active site.

Belongs to the HisA/HisF family.

The protein localises to the cytoplasm. The enzyme catalyses 1-(5-phospho-beta-D-ribosyl)-5-[(5-phospho-beta-D-ribosylamino)methylideneamino]imidazole-4-carboxamide = 5-[(5-phospho-1-deoxy-D-ribulos-1-ylimino)methylamino]-1-(5-phospho-beta-D-ribosyl)imidazole-4-carboxamide. Its pathway is amino-acid biosynthesis; L-histidine biosynthesis; L-histidine from 5-phospho-alpha-D-ribose 1-diphosphate: step 4/9. This Dinoroseobacter shibae (strain DSM 16493 / NCIMB 14021 / DFL 12) protein is 1-(5-phosphoribosyl)-5-[(5-phosphoribosylamino)methylideneamino] imidazole-4-carboxamide isomerase.